A 226-amino-acid polypeptide reads, in one-letter code: Probable septum site-determining protein MinC (226 aa).

The protein belongs to the MinC family. In terms of assembly, interacts with MinD and FtsZ.

Cell division inhibitor that blocks the formation of polar Z ring septums. Rapidly oscillates between the poles of the cell to destabilize FtsZ filaments that have formed before they mature into polar Z rings. Prevents FtsZ polymerization. In Bacillus velezensis (strain DSM 23117 / BGSC 10A6 / LMG 26770 / FZB42) (Bacillus amyloliquefaciens subsp. plantarum), this protein is Probable septum site-determining protein MinC.